Consider the following 343-residue polypeptide: Holliday junction branch migration complex subunit RuvB (343 aa).

The large ATPase domain (RuvB-L) stretch occupies residues 1–186 (MTEEFDIRQE…FGINLHLEYY (186 aa)). ATP is bound by residues leucine 25, arginine 26, glycine 67, lysine 70, threonine 71, threonine 72, 133–135 (EDY), arginine 176, tyrosine 186, and arginine 223. Threonine 71 is a binding site for Mg(2+). Residues 187–257 (DVHTITGIVE…IACYALEALN (71 aa)) are small ATPAse domain (RuvB-S). The head domain (RuvB-H) stretch occupies residues 260–343 (RYGLDNVDHK…PRPHRPSLFD (84 aa)). Positions 315 and 320 each coordinate DNA.

Belongs to the RuvB family. As to quaternary structure, homohexamer. Forms an RuvA(8)-RuvB(12)-Holliday junction (HJ) complex. HJ DNA is sandwiched between 2 RuvA tetramers; dsDNA enters through RuvA and exits via RuvB. An RuvB hexamer assembles on each DNA strand where it exits the tetramer. Each RuvB hexamer is contacted by two RuvA subunits (via domain III) on 2 adjacent RuvB subunits; this complex drives branch migration. In the full resolvosome a probable DNA-RuvA(4)-RuvB(12)-RuvC(2) complex forms which resolves the HJ.

The protein localises to the cytoplasm. It carries out the reaction ATP + H2O = ADP + phosphate + H(+). The RuvA-RuvB-RuvC complex processes Holliday junction (HJ) DNA during genetic recombination and DNA repair, while the RuvA-RuvB complex plays an important role in the rescue of blocked DNA replication forks via replication fork reversal (RFR). RuvA specifically binds to HJ cruciform DNA, conferring on it an open structure. The RuvB hexamer acts as an ATP-dependent pump, pulling dsDNA into and through the RuvAB complex. RuvB forms 2 homohexamers on either side of HJ DNA bound by 1 or 2 RuvA tetramers; 4 subunits per hexamer contact DNA at a time. Coordinated motions by a converter formed by DNA-disengaged RuvB subunits stimulates ATP hydrolysis and nucleotide exchange. Immobilization of the converter enables RuvB to convert the ATP-contained energy into a lever motion, pulling 2 nucleotides of DNA out of the RuvA tetramer per ATP hydrolyzed, thus driving DNA branch migration. The RuvB motors rotate together with the DNA substrate, which together with the progressing nucleotide cycle form the mechanistic basis for DNA recombination by continuous HJ branch migration. Branch migration allows RuvC to scan DNA until it finds its consensus sequence, where it cleaves and resolves cruciform DNA. This chain is Holliday junction branch migration complex subunit RuvB, found in Porphyromonas gingivalis (strain ATCC BAA-308 / W83).